The sequence spans 455 residues: Bifunctional protein GlmU (455 aa).

Residues 1–228 (MTQPLHVIIL…AQEAEGANDP (228 aa)) are pyrophosphorylase. UDP-N-acetyl-alpha-D-glucosamine-binding positions include 10–13 (LAAG), Lys24, Gln76, 81–82 (GT), 103–105 (YGD), Gly138, Glu153, Asn168, and Asn226. Position 105 (Asp105) interacts with Mg(2+). Asn226 contributes to the Mg(2+) binding site. The linker stretch occupies residues 229-249 (WQLSQLERAWQRRAVRALCAQ). The interval 250–455 (GARVRDPARL…DGWKRPLKKS (206 aa)) is N-acetyltransferase. The UDP-N-acetyl-alpha-D-glucosamine site is built by Arg332 and Lys350. Catalysis depends on His362, which acts as the Proton acceptor. Tyr365 and Asn376 together coordinate UDP-N-acetyl-alpha-D-glucosamine. Acetyl-CoA contacts are provided by residues Ala379, 385 to 386 (NY), Ser404, Ala422, and Arg439.

In the N-terminal section; belongs to the N-acetylglucosamine-1-phosphate uridyltransferase family. The protein in the C-terminal section; belongs to the transferase hexapeptide repeat family. Homotrimer. Requires Mg(2+) as cofactor.

It localises to the cytoplasm. It carries out the reaction alpha-D-glucosamine 1-phosphate + acetyl-CoA = N-acetyl-alpha-D-glucosamine 1-phosphate + CoA + H(+). The catalysed reaction is N-acetyl-alpha-D-glucosamine 1-phosphate + UTP + H(+) = UDP-N-acetyl-alpha-D-glucosamine + diphosphate. It functions in the pathway nucleotide-sugar biosynthesis; UDP-N-acetyl-alpha-D-glucosamine biosynthesis; N-acetyl-alpha-D-glucosamine 1-phosphate from alpha-D-glucosamine 6-phosphate (route II): step 2/2. The protein operates within nucleotide-sugar biosynthesis; UDP-N-acetyl-alpha-D-glucosamine biosynthesis; UDP-N-acetyl-alpha-D-glucosamine from N-acetyl-alpha-D-glucosamine 1-phosphate: step 1/1. Its pathway is bacterial outer membrane biogenesis; LPS lipid A biosynthesis. Its function is as follows. Catalyzes the last two sequential reactions in the de novo biosynthetic pathway for UDP-N-acetylglucosamine (UDP-GlcNAc). The C-terminal domain catalyzes the transfer of acetyl group from acetyl coenzyme A to glucosamine-1-phosphate (GlcN-1-P) to produce N-acetylglucosamine-1-phosphate (GlcNAc-1-P), which is converted into UDP-GlcNAc by the transfer of uridine 5-monophosphate (from uridine 5-triphosphate), a reaction catalyzed by the N-terminal domain. This chain is Bifunctional protein GlmU, found in Stenotrophomonas maltophilia (strain R551-3).